Reading from the N-terminus, the 495-residue chain is Bifunctional protein GlmU (495 aa).

Residues 1 to 241 form a pyrophosphorylase region; it reads MTFPGDTAVL…SALVAGVNNR (241 aa). Residues 12–15, Lys26, Gln83, 88–89, 112–114, Gly151, Glu166, Asn181, and Asn239 each bind UDP-N-acetyl-alpha-D-glucosamine; these read LAAG, GT, and SGD. Asp114 contacts Mg(2+). Asn239 is a Mg(2+) binding site. The linker stretch occupies residues 242–262; sequence VQLAELASELNRRVVAAHQLA. Residues 263-495 are N-acetyltransferase; it reads GVTVVDPATT…TQPPDADQTP (233 aa). The UDP-N-acetyl-alpha-D-glucosamine site is built by Arg344 and Lys362. Catalysis depends on His374, which acts as the Proton acceptor. 2 residues coordinate UDP-N-acetyl-alpha-D-glucosamine: Tyr377 and Asn388. Acetyl-CoA is bound by residues Ala391, 397-398, Ser416, and Ala434; that span reads NY. The disordered stretch occupies residues 457 to 495; the sequence is IENWVQRKRPGSPAAQASKRASEMACQQPTQPPDADQTP. Residues 483–495 show a composition bias toward low complexity; sequence QQPTQPPDADQTP.

The protein in the N-terminal section; belongs to the N-acetylglucosamine-1-phosphate uridyltransferase family. It in the C-terminal section; belongs to the transferase hexapeptide repeat family. As to quaternary structure, homotrimer. Mg(2+) is required as a cofactor.

It is found in the cytoplasm. The enzyme catalyses alpha-D-glucosamine 1-phosphate + acetyl-CoA = N-acetyl-alpha-D-glucosamine 1-phosphate + CoA + H(+). The catalysed reaction is N-acetyl-alpha-D-glucosamine 1-phosphate + UTP + H(+) = UDP-N-acetyl-alpha-D-glucosamine + diphosphate. The protein operates within nucleotide-sugar biosynthesis; UDP-N-acetyl-alpha-D-glucosamine biosynthesis; N-acetyl-alpha-D-glucosamine 1-phosphate from alpha-D-glucosamine 6-phosphate (route II): step 2/2. It participates in nucleotide-sugar biosynthesis; UDP-N-acetyl-alpha-D-glucosamine biosynthesis; UDP-N-acetyl-alpha-D-glucosamine from N-acetyl-alpha-D-glucosamine 1-phosphate: step 1/1. Its pathway is bacterial outer membrane biogenesis; LPS lipid A biosynthesis. In terms of biological role, catalyzes the last two sequential reactions in the de novo biosynthetic pathway for UDP-N-acetylglucosamine (UDP-GlcNAc). The C-terminal domain catalyzes the transfer of acetyl group from acetyl coenzyme A to glucosamine-1-phosphate (GlcN-1-P) to produce N-acetylglucosamine-1-phosphate (GlcNAc-1-P), which is converted into UDP-GlcNAc by the transfer of uridine 5-monophosphate (from uridine 5-triphosphate), a reaction catalyzed by the N-terminal domain. In Mycobacterium tuberculosis (strain ATCC 25177 / H37Ra), this protein is Bifunctional protein GlmU.